Reading from the N-terminus, the 666-residue chain is Probable potassium transport system protein Kup (666 aa).

The next 12 membrane-spanning stretches (helical) occupy residues 16 to 36 (GFII…LYTM), 58 to 78 (ISLI…LIAL), 100 to 120 (PWLI…GALT), 141 to 161 (IYQN…VLFG), 165 to 185 (FGTG…FSFL), 221 to 241 (IFIL…YSDL), 253 to 273 (WPFV…WILA), 294 to 314 (VYLV…LISG), 343 to 363 (LYIP…VLAF), 373 to 393 (YGLA…YYLI), 399 to 419 (PILA…FFLA), and 424 to 444 (FMHG…VMFI).

This sequence belongs to the HAK/KUP transporter (TC 2.A.72) family.

It is found in the cell membrane. It catalyses the reaction K(+)(in) + H(+)(in) = K(+)(out) + H(+)(out). Its function is as follows. Transport of potassium into the cell. Likely operates as a K(+):H(+) symporter. This chain is Probable potassium transport system protein Kup, found in Streptococcus pyogenes serotype M49 (strain NZ131).